The following is a 167-amino-acid chain: Thioredoxin-like protein HI_1115 (167 aa).

A helical membrane pass occupies residues 10–27; the sequence is GLSLFLTFIVITSILDFV. The Thioredoxin domain maps to 30 to 167; the sequence is PVVPEEINKI…VRLFFAEFFG (138 aa). C69 and C72 are joined by a disulfide.

The protein belongs to the thioredoxin family.

It localises to the cell membrane. This Haemophilus influenzae (strain ATCC 51907 / DSM 11121 / KW20 / Rd) protein is Thioredoxin-like protein HI_1115.